Here is a 418-residue protein sequence, read N- to C-terminus: Inner capsid protein sigma-2 (418 aa).

Belongs to the orthoreovirus sigma-1 protein family. As to quaternary structure, interacts with protein mu-NS; in viral inclusions.

It is found in the virion. Inner capsid (core) component. The sequence is that of Inner capsid protein sigma-2 (S2) from Mammalia (T2J).